A 312-amino-acid chain; its full sequence is Dehydrogenase/reductase SDR family member 7C (312 aa).

An N-terminal signal peptide occupies residues 1 to 18 (MGVMAMLMLPLLLLGISG). NAD(+)-binding residues include serine 47, leucine 49, tyrosine 192, lysine 196, and serine 227. The active-site Proton acceptor is tyrosine 192.

This sequence belongs to the short-chain dehydrogenases/reductases (SDR) family.

It is found in the sarcoplasmic reticulum membrane. It catalyses the reaction all-trans-retinol + NAD(+) = all-trans-retinal + NADH + H(+). NADH-dependent oxidoreductase which catalyzes the oxidation of all-trans-retinol to all-trans-retinal. Plays a role in the regulation of cardiac and skeletal muscle metabolic functions. Maintains Ca(2+) intracellular homeostasis by repressing Ca(2+) release from the sarcoplasmic reticulum (SR) in myotubes, possibly through local alternations in NAD/NADH or retinol/retinal. Also plays a role in Ca(2+) homeostasis by controlling Ca(2+) overload in the cytosol and the SR in myotubes. Involved in glucose uptake into skeletal muscles and muscle performance by activating PI3K and mTORC2-mediated AKT1 phosphorylation signaling pathways, possibly through the action of its downstream catalytic product all-trans-retinoic acid. The sequence is that of Dehydrogenase/reductase SDR family member 7C from Homo sapiens (Human).